The chain runs to 344 residues: Late embryogenesis abundant protein 17 (344 aa).

2 disordered regions span residues 1-20 and 116-258; these read MASR…RRAA and KDYT…QGQG. Residues 3-52 adopt a coiled-coil conformation; that stretch reads SRQDRREARAEADARRAAEEIARARDERVMQAEVDARSAADEIARARADR. Composition is skewed to basic and acidic residues over residues 116 to 163, 172 to 230, and 238 to 252; these read KDYT…KDAV, EATK…DATK, and DKAR…DATD.

The protein belongs to the LEA type 4 family. In terms of tissue distribution, expressed in embryos.

The protein resides in the nucleus. In terms of biological role, involved in abiotic stress responses. May function as chaperone and contribute to prevent the formation of damaging protein aggregates. The polypeptide is Late embryogenesis abundant protein 17 (Oryza sativa subsp. japonica (Rice)).